The following is a 540-amino-acid chain: Cytochrome P450 monooxygenase prx8 (540 aa).

A helical transmembrane segment spans residues 50–68; that stretch reads ALGAAIALFACACAYALVA. Asn460 carries N-linked (GlcNAc...) asparagine glycosylation. Position 483 (Cys483) interacts with heme.

Belongs to the cytochrome P450 family. The cofactor is heme.

It is found in the membrane. The protein operates within sesquiterpene biosynthesis. Functionally, cytochrome P450 monooxygenase; part of the gene cluster that mediates the biosynthesis of PR-toxin, a bicyclic sesquiterpene belonging to the eremophilane class and acting as a mycotoxin. The first step of the pathway is catalyzed by the aristolochene synthase which performs the cyclization of trans,trans-farnesyl diphosphate (FPP) to the bicyclic sesquiterpene aristolochene. Following the formation of aristolochene, the non-oxygenated aristolochene is converted to the trioxygenated intermediate eremofortin B, via 7-epi-neopetasone. This conversion appears to involve three enzymes, a hydroxysterol oxidase-like enzyme, the quinone-oxidase prx3 that forms the quinone-type-structure in the bicyclic nucleus of aristolochene with the C8-oxo group and the C-3 hydroxyl group, and the P450 monooxygenase prx9 that introduces the epoxide at the double bond between carbons 1 and 2. No monoxy or dioxy-intermediates have been reported to be released to the broth, so these three early oxidative reactions may be coupled together. Eremofortin B is further oxidized by another P450 monooxygenase, that introduces a second epoxide between carbons 7 and 11 prior to acetylation to eremofortin A by the acetyltransferase prx11. The second epoxidation may be performed by a second P450 monooxygenase. After the acetylation step, eremofortin A is converted to eremofortin C and then to PR-toxin. First the conversion of eremofortin A to eremofortin C proceeds by oxidation of the side chain of the molecule at C-12 and is catalyzed by the short-chain oxidoreductase prx1. The cytochrome P450 monooxygenase prx8 also plays a role in this step. The primary alcohol formed at C-12 is finally oxidized by the short-chain alcohol dehydrogenase prx4 that forms PR-toxin. This is Cytochrome P450 monooxygenase prx8 from Penicillium rubens (strain ATCC 28089 / DSM 1075 / NRRL 1951 / Wisconsin 54-1255) (Penicillium chrysogenum).